The sequence spans 618 residues: Beta-xylosidase (618 aa).

Disordered stretches follow at residues 76 to 100 (ERDR…QEES) and 463 to 509 (LEPQ…PPIQ).

The protein belongs to the glycosyl hydrolase 52 family.

The protein resides in the secreted. It carries out the reaction Hydrolysis of (1-&gt;4)-beta-D-xylans, to remove successive D-xylose residues from the non-reducing termini.. The protein operates within glycan degradation; xylan degradation. This is Beta-xylosidase (xylA) from Geobacillus stearothermophilus (Bacillus stearothermophilus).